The following is a 153-amino-acid chain: Nucleoside diphosphate kinase (153 aa).

Positions 9, 57, 85, 91, 102, and 112 each coordinate ATP. The Pros-phosphohistidine intermediate role is filled by His115.

The protein belongs to the NDK family. As to quaternary structure, homotetramer. Mg(2+) serves as cofactor.

Its subcellular location is the cytoplasm. It catalyses the reaction a 2'-deoxyribonucleoside 5'-diphosphate + ATP = a 2'-deoxyribonucleoside 5'-triphosphate + ADP. The enzyme catalyses a ribonucleoside 5'-diphosphate + ATP = a ribonucleoside 5'-triphosphate + ADP. Functionally, major role in the synthesis of nucleoside triphosphates other than ATP. The ATP gamma phosphate is transferred to the NDP beta phosphate via a ping-pong mechanism, using a phosphorylated active-site intermediate. This chain is Nucleoside diphosphate kinase, found in Parabacteroides distasonis (strain ATCC 8503 / DSM 20701 / CIP 104284 / JCM 5825 / NCTC 11152).